The following is a 299-amino-acid chain: Oxygen-dependent coproporphyrinogen-III oxidase (299 aa).

Ser-92 provides a ligand contact to substrate. The a divalent metal cation site is built by His-96 and His-106. His-106 serves as the catalytic Proton donor. Position 108 to 110 (108 to 110 (NVR)) interacts with substrate. A divalent metal cation-binding residues include His-145 and His-175. The important for dimerization stretch occupies residues 240–275 (YVEFNLVWDRGTLFGLQTGGRTESILMSMPPLVRWE). 258 to 260 (GGR) serves as a coordination point for substrate.

Belongs to the aerobic coproporphyrinogen-III oxidase family. Homodimer. A divalent metal cation is required as a cofactor.

It is found in the cytoplasm. It carries out the reaction coproporphyrinogen III + O2 + 2 H(+) = protoporphyrinogen IX + 2 CO2 + 2 H2O. The protein operates within porphyrin-containing compound metabolism; protoporphyrin-IX biosynthesis; protoporphyrinogen-IX from coproporphyrinogen-III (O2 route): step 1/1. Involved in the heme biosynthesis. Catalyzes the aerobic oxidative decarboxylation of propionate groups of rings A and B of coproporphyrinogen-III to yield the vinyl groups in protoporphyrinogen-IX. The sequence is that of Oxygen-dependent coproporphyrinogen-III oxidase from Enterobacter sp. (strain 638).